An 80-amino-acid polypeptide reads, in one-letter code: Cytochrome c oxidase subunit 7A1, mitochondrial (80 aa).

Residues 1–21 constitute a mitochondrion transit peptide; sequence MRALRVSQALVRSFSSTARNR. Over 22-46 the chain is Mitochondrial matrix; the sequence is LENRVAEKQKIFQADNDLPVHLKGG. A helical membrane pass occupies residues 47–75; it reads ATDNILYRVTMTLCLGGTVYSLYCLGWAS. Residues 76–80 lie on the Mitochondrial intermembrane side of the membrane; the sequence is FPHKK.

Belongs to the cytochrome c oxidase VIIa family. As to quaternary structure, component of the complex IV (CIV, cytochrome c oxidase), a multisubunit enzyme composed of 14 subunits. The complex is composed of a catalytic core of 3 subunits MT-CO1, MT-CO2 and MT-CO3, encoded in the mitochondrial DNA, and 11 supernumerary subunits COX4I1 (or COX4I2), COX5A, COX5B, COX6A2 (or COX6A1), COX6B1 (or COX6B2), COX6C, COX7A1 (or COX7A2), COX7B, COX7C, COX8B and NDUFA4, which are encoded in the nuclear genome. The complex exists as a monomer or a dimer and forms supercomplexes (SCs) in the inner mitochondrial membrane with NADH-ubiquinone oxidoreductase (complex I, CI) and ubiquinol-cytochrome c oxidoreductase (cytochrome b-c1 complex, complex III, CIII), resulting in different assemblies (supercomplex SCI(1)III(2)IV(1) and megacomplex MCI(2)III(2)IV(2)).

Its subcellular location is the mitochondrion inner membrane. The protein operates within energy metabolism; oxidative phosphorylation. Component of the mitochondrial respiratory complex IV (CIV, also named cytochrome c oxidase complex), the last enzyme in the mitochondrial electron transport chain which drives oxidative phosphorylation. The CIV complex is the component of the respiratory chain that catalyzes the reduction of oxygen to water. Acts as an assembly factor that specifically drives the homodimerization of CIV complexes, mediating the formation of mitochondrial respiratory supercomplexes (respirasomes) containing two CIV: supercomplxes with two molecules of CIV show improved activity. Despite being highly expressed in brown adipose tissue, not required for thermogenesis. The polypeptide is Cytochrome c oxidase subunit 7A1, mitochondrial (COX7A1) (Sus scrofa (Pig)).